Here is a 162-residue protein sequence, read N- to C-terminus: Cyclic pyranopterin monophosphate synthase (162 aa).

Substrate is bound by residues 75–77 (LCH) and 113–114 (ME). Asp-128 is an active-site residue.

It belongs to the MoaC family. Homohexamer; trimer of dimers.

The catalysed reaction is (8S)-3',8-cyclo-7,8-dihydroguanosine 5'-triphosphate = cyclic pyranopterin phosphate + diphosphate. It participates in cofactor biosynthesis; molybdopterin biosynthesis. Functionally, catalyzes the conversion of (8S)-3',8-cyclo-7,8-dihydroguanosine 5'-triphosphate to cyclic pyranopterin monophosphate (cPMP). In Klebsiella pneumoniae subsp. pneumoniae (strain ATCC 700721 / MGH 78578), this protein is Cyclic pyranopterin monophosphate synthase.